The chain runs to 418 residues: CCA-adding enzyme (418 aa).

Residues serine 54 and arginine 57 each contribute to the ATP site. Residues serine 54 and arginine 57 each contribute to the CTP site. Residues aspartate 66, aspartate 68, and aspartate 118 each contribute to the Mg(2+) site. Histidine 141, lysine 161, and tyrosine 170 together coordinate ATP. The CTP site is built by histidine 141, lysine 161, and tyrosine 170.

It belongs to the tRNA nucleotidyltransferase/poly(A) polymerase family. Archaeal CCA-adding enzyme subfamily. As to quaternary structure, homodimer. Mg(2+) is required as a cofactor.

It catalyses the reaction a tRNA precursor + 2 CTP + ATP = a tRNA with a 3' CCA end + 3 diphosphate. The catalysed reaction is a tRNA with a 3' CCA end + 2 CTP + ATP = a tRNA with a 3' CCACCA end + 3 diphosphate. Functionally, catalyzes the addition and repair of the essential 3'-terminal CCA sequence in tRNAs without using a nucleic acid template. Adds these three nucleotides in the order of C, C, and A to the tRNA nucleotide-73, using CTP and ATP as substrates and producing inorganic pyrophosphate. tRNA 3'-terminal CCA addition is required both for tRNA processing and repair. Also involved in tRNA surveillance by mediating tandem CCA addition to generate a CCACCA at the 3' terminus of unstable tRNAs. While stable tRNAs receive only 3'-terminal CCA, unstable tRNAs are marked with CCACCA and rapidly degraded. The protein is CCA-adding enzyme of Pyrobaculum islandicum (strain DSM 4184 / JCM 9189 / GEO3).